The primary structure comprises 1138 residues: Exportin-6-B (1138 aa).

The Importin N-terminal domain occupies 31-97; it reads IESLLNNFAQ…RSSLPKLLLS (67 aa). Residues 291–307 are compositionally biased toward low complexity; it reads SVTTNTTSSVVNGGSSS. A disordered region spans residues 291 to 315; it reads SVTTNTTSSVVNGGSSSPPLHSAAP.

This sequence belongs to the exportin family.

The protein localises to the nucleus. The protein resides in the cytoplasm. Functionally, mediates the nuclear export of actin and profilin-actin complexes in somatic cells. Oocyte nuclei lack active actin export. In terms of biological role, mediates the nuclear export of actin and profilin-actin complexes in somatic cells. This Xenopus laevis (African clawed frog) protein is Exportin-6-B (xpo6-b).